A 150-amino-acid polypeptide reads, in one-letter code: Large ribosomal subunit protein bL9 (150 aa).

This sequence belongs to the bacterial ribosomal protein bL9 family.

Binds to the 23S rRNA. The protein is Large ribosomal subunit protein bL9 of Corynebacterium jeikeium (strain K411).